Here is a 199-residue protein sequence, read N- to C-terminus: Shikimate kinase (199 aa).

Position 34-39 (34-39) interacts with ATP; sequence GAGKTA. Residue T38 coordinates Mg(2+). 3 residues coordinate substrate: D56, R80, and G102. R140 contributes to the ATP binding site. Residue R159 coordinates substrate.

Belongs to the shikimate kinase family. Monomer. Requires Mg(2+) as cofactor.

Its subcellular location is the cytoplasm. The catalysed reaction is shikimate + ATP = 3-phosphoshikimate + ADP + H(+). It functions in the pathway metabolic intermediate biosynthesis; chorismate biosynthesis; chorismate from D-erythrose 4-phosphate and phosphoenolpyruvate: step 5/7. Functionally, catalyzes the specific phosphorylation of the 3-hydroxyl group of shikimic acid using ATP as a cosubstrate. This chain is Shikimate kinase, found in Cereibacter sphaeroides (strain ATCC 17023 / DSM 158 / JCM 6121 / CCUG 31486 / LMG 2827 / NBRC 12203 / NCIMB 8253 / ATH 2.4.1.) (Rhodobacter sphaeroides).